The chain runs to 211 residues: ATP phosphoribosyltransferase (211 aa).

It belongs to the ATP phosphoribosyltransferase family. Short subfamily. Heteromultimer composed of HisG and HisZ subunits.

Its subcellular location is the cytoplasm. The catalysed reaction is 1-(5-phospho-beta-D-ribosyl)-ATP + diphosphate = 5-phospho-alpha-D-ribose 1-diphosphate + ATP. Its pathway is amino-acid biosynthesis; L-histidine biosynthesis; L-histidine from 5-phospho-alpha-D-ribose 1-diphosphate: step 1/9. In terms of biological role, catalyzes the condensation of ATP and 5-phosphoribose 1-diphosphate to form N'-(5'-phosphoribosyl)-ATP (PR-ATP). Has a crucial role in the pathway because the rate of histidine biosynthesis seems to be controlled primarily by regulation of HisG enzymatic activity. The sequence is that of ATP phosphoribosyltransferase from Lacticaseibacillus casei (strain BL23) (Lactobacillus casei).